The chain runs to 430 residues: Histidine--tRNA ligase (430 aa).

The protein belongs to the class-II aminoacyl-tRNA synthetase family. As to quaternary structure, homodimer.

The protein resides in the cytoplasm. It carries out the reaction tRNA(His) + L-histidine + ATP = L-histidyl-tRNA(His) + AMP + diphosphate + H(+). This chain is Histidine--tRNA ligase, found in Acinetobacter baumannii (strain SDF).